Here is a 333-residue protein sequence, read N- to C-terminus: METGPHYNYYKNRELSIVLAPFSGGQGKLGVEKGPKYMLKHGLQTSIEDLGWSTELEPSMDEAQFVGKLKMEKDSTTGGSSVMIDGVKAKRADLVGEATKLVYNSVSKVVQANRFPLTLGGDHSIAIGTVSAVLDKYPDAGLLWIDAHADINTIESTPSGNLHGCPVSFLMGLNKDVPHCPESLKWVPGNLSPKKIAYIGLRDVDAGEKKILKDLGIAAFSMYHVDKYGINAVIEMAMKAVHPETNGEGPIMCSYDVDGVDPLYIPATGTPVRGGLTLREGLFLVERLAESGNLIALDVVECNPDLAIHDIHVSNTISAGCAIARCALGETLL.

Met1 carries the N-acetylmethionine modification. Phosphoserine is present on Ser16. A Phosphothreonine modification is found at Thr77. Mn(2+) contacts are provided by His123, Asp146, His148, and Asp150. Substrate contacts are provided by residues 148-152 (HADIN), 159-161 (SGN), and Asp205. Mn(2+) is bound by residues Asp256 and Asp258. Thr270 is subject to Phosphothreonine. Substrate contacts are provided by Thr270 and Glu301.

Belongs to the arginase family. As to quaternary structure, homotrimer. It depends on Mn(2+) as a cofactor.

The catalysed reaction is L-arginine + H2O = urea + L-ornithine. It participates in nitrogen metabolism; urea cycle; L-ornithine and urea from L-arginine: step 1/1. The chain is Arginase (CAR1) from Saccharomyces cerevisiae (strain ATCC 204508 / S288c) (Baker's yeast).